Consider the following 1719-residue polypeptide: Chromodomain-helicase-DNA-binding protein 1 (1719 aa).

A compositionally biased stretch (basic and acidic residues) spans 1–10; that stretch reads MNGHSDEESV. The interval 1–249 is disordered; sequence MNGHSDEESV…EAEETKTDSD (249 aa). The span at 34–62 shows a compositional bias: low complexity; it reads SSGSSSDGSSSQSGSSDSESGSESGSQSE. Residues 66-85 show a composition bias toward basic and acidic residues; the sequence is DTSREKKQVQAKPPKADGSE. Low complexity predominate over residues 103-116; sequence KKQQQQQKAASSDS. The span at 117 to 133 shows a compositional bias: acidic residues; the sequence is GSEEDSSSSEDSADDSS. Low complexity predominate over residues 149–160; the sequence is SGSGSVSGTGSD. Positions 161-178 are enriched in acidic residues; it reads SESEEDGDKSSCEESESD. Over residues 184–207 the composition is skewed to basic residues; it reads KVKSRKPPSRIKPKSGKKSTGQKK. Residues 212–222 are compositionally biased toward acidic residues; the sequence is SSEEEEDDDED. The span at 239–248 shows a compositional bias: basic and acidic residues; that stretch reads KEAEETKTDS. Chromo domains follow at residues 268-360 and 385-448; these read ETIE…RWLK and QIVE…TPFK. In terms of domain architecture, Helicase ATP-binding spans 489 to 659; it reads AHSWCKGNSC…WSLLHFIMPE (171 aa). An ATP-binding site is contributed by 502–509; that stretch reads DEMGLGKT. Residues 610–613 carry the DEAH box motif; the sequence is DEAH. The Helicase C-terminal domain maps to 788 to 939; it reads LLDKLLIRLR…HLVIQRMDTT (152 aa). 3 disordered regions span residues 1076–1116, 1319–1393, and 1503–1719; these read ISFN…TIPR, QRLA…TPVH, and KKRQ…SRKT. 2 stretches are compositionally biased toward basic residues: residues 1103–1113 and 1327–1342; these read KRPKKRGRPRT and SKRR…MKAS. Residues 1369 to 1380 are compositionally biased toward basic and acidic residues; sequence NKVNEIKSENKE. Residues 1410–1512 form a CHD1 helical C-terminal domain (CHCT) region; sequence LDQKTFSVCK…KKRQESQQHN (103 aa). The span at 1511–1524 shows a compositional bias: polar residues; that stretch reads HNDQNISSNVNTHV. Basic and acidic residues-rich tracts occupy residues 1526 to 1576, 1585 to 1673, and 1698 to 1710; these read RNPD…DSRK, GKDH…DHRA, and SPFE…KSTP.

The protein belongs to the SNF2/RAD54 helicase family. Component of the SAGA complex. Interacts with SSRP1.

The protein localises to the nucleus. Its subcellular location is the chromosome. The protein resides in the centromere. It catalyses the reaction ATP + H2O = ADP + phosphate + H(+). Its function is as follows. ATP-dependent chromatin-remodeling factor which functions as substrate recognition component of the transcription regulatory histone acetylation (HAT) complex SAGA. Regulates polymerase II transcription. Also required for efficient transcription by RNA polymerase I, and more specifically the polymerase I transcription termination step. Regulates negatively DNA replication. Not only involved in transcription-related chromatin remodeling, but also required to maintain a specific chromatin configuration across the genome. Required for maintaining open chromatin and pluripotency in embryonic stem cells. Required for centromeric localization of CENPA. This is Chromodomain-helicase-DNA-binding protein 1 (CHD1) from Gallus gallus (Chicken).